A 201-amino-acid chain; its full sequence is Holliday junction resolvase RecU (201 aa).

Mg(2+) is bound by residues Thr-87, Asp-89, Asp-102, and Gln-121.

The protein belongs to the RecU family. The cofactor is Mg(2+).

The protein localises to the cytoplasm. It carries out the reaction Endonucleolytic cleavage at a junction such as a reciprocal single-stranded crossover between two homologous DNA duplexes (Holliday junction).. Its function is as follows. Endonuclease that resolves Holliday junction intermediates in genetic recombination. Cleaves mobile four-strand junctions by introducing symmetrical nicks in paired strands. Promotes annealing of linear ssDNA with homologous dsDNA. Required for DNA repair, homologous recombination and chromosome segregation. The polypeptide is Holliday junction resolvase RecU (Levilactobacillus brevis (strain ATCC 367 / BCRC 12310 / CIP 105137 / JCM 1170 / LMG 11437 / NCIMB 947 / NCTC 947) (Lactobacillus brevis)).